We begin with the raw amino-acid sequence, 1534 residues long: DNA polymerase alpha catalytic subunit (1534 aa).

Low complexity predominate over residues 1 to 12 (MDEGSADAGASG). 3 disordered regions span residues 1 to 23 (MDEGSADAGASGRRSRARGSEAV), 96 to 141 (THRT…LSAA), and 864 to 905 (FNST…GPSY). The segment covering 116-125 (RKRKQPRPQS) has biased composition (basic residues). Residues 127-141 (RPPQQSAAAASLSAA) show a composition bias toward low complexity. 2 stretches are compositionally biased toward basic and acidic residues: residues 864–882 (FNSTKRKMNPDTEAARPDE) and 889–898 (DEGHHVDQGK). The Zn(2+) site is built by C1340, C1343, C1383, C1386, C1422, C1427, C1448, and C1454. The CysA-type zinc-finger motif lies at 1340 to 1386 (CPSCSTTFDCPPVSSLIIGSSSGNVSNPNEGNDASINFWRRMRCPRC). The short motif at 1422 to 1451 (CDDEGCKYSTHSVNLRVMGDSERGTICPNY) is the CysB motif element.

Belongs to the DNA polymerase type-B family.

The protein localises to the nucleus. The catalysed reaction is DNA(n) + a 2'-deoxyribonucleoside 5'-triphosphate = DNA(n+1) + diphosphate. Functionally, polymerase alpha in a complex with DNA primase is a replicative polymerase. This chain is DNA polymerase alpha catalytic subunit, found in Oryza sativa subsp. japonica (Rice).